A 220-amino-acid chain; its full sequence is Protein-L-isoaspartate O-methyltransferase (220 aa).

S64 is an active-site residue.

This sequence belongs to the methyltransferase superfamily. L-isoaspartyl/D-aspartyl protein methyltransferase family.

The protein resides in the cytoplasm. The catalysed reaction is [protein]-L-isoaspartate + S-adenosyl-L-methionine = [protein]-L-isoaspartate alpha-methyl ester + S-adenosyl-L-homocysteine. Its function is as follows. Catalyzes the methyl esterification of L-isoaspartyl residues in peptides and proteins that result from spontaneous decomposition of normal L-aspartyl and L-asparaginyl residues. It plays a role in the repair and/or degradation of damaged proteins. This is Protein-L-isoaspartate O-methyltransferase from Thermococcus onnurineus (strain NA1).